The sequence spans 562 residues: Formate--tetrahydrofolate ligase (562 aa).

ATP is bound at residue 70–77 (TPAGEGKS).

This sequence belongs to the formate--tetrahydrofolate ligase family.

The catalysed reaction is (6S)-5,6,7,8-tetrahydrofolate + formate + ATP = (6R)-10-formyltetrahydrofolate + ADP + phosphate. It participates in one-carbon metabolism; tetrahydrofolate interconversion. In Paenarthrobacter aurescens (strain TC1), this protein is Formate--tetrahydrofolate ligase.